We begin with the raw amino-acid sequence, 327 residues long: MSFLGGFFGPICEIDVALSDGETRKMAEMKTEDGKVEKHYLFYDGESVSGKVNLAFKQPGKRLEHQGIRIEFVGQIELFNDKSNTHEFVNLVKELALPGELTQSRSYDFEFMQVEKPYESYIGANVRLRYFLKVTIVRRLTDLVKEYDLIVHQLATYPEVNNSIKMEVGIEDCLHIEFEYNKSKYHLKDVIVGKIYFLLVRIKIQHMELQLIKKEITGIGPSTTTETETIAKYEIMDGAPVKGESIPIRLFLAGYDPTPTMRDVNKKFSVRYFLNLVLVDEEDRRYFKQQEIILWRKAPEKLRKQRTNFHQRFESPESQASAEQPEM.

The segment at 306–327 is disordered; the sequence is RTNFHQRFESPESQASAEQPEM. At S315 the chain carries Phosphoserine. The segment covering 316–327 has biased composition (polar residues); it reads PESQASAEQPEM.

It belongs to the VPS26 family. In terms of assembly, component of the heterotrimeric retromer cargo-selective complex (CSC), also described as vacuolar protein sorting subcomplex (VPS), formed by VPS26 (VPS26A or VPS26B), VPS29 and VPS35. The CSC has a highly elongated structure with VPS26 and VPS29 binding independently at opposite distal ends of VPS35 as central platform. The CSC is believed to associate with variable sorting nexins to form functionally distinct retromer complex variants. The originally described retromer complex (also called SNX-BAR retromer) is a pentamer containing the CSC and a heterodimeric membrane-deforming subcomplex formed between SNX1 or SNX2 and SNX5 or SNX6 (also called SNX-BAR subcomplex); the respective CSC and SNX-BAR subcomplexes associate with low affinity. The CSC associates with SNX3 to form a SNX3-retromer complex. The CSC associates with SNX27, the WASH complex and the SNX-BAR subcomplex to form the SNX27-retromer complex. Interacts with VPS29, VPS35, SNX27, SNX1, SNX2, SNX5, SNX6, SNX3, RAB7A, ECPAS, EHD1, WASHC5, SORL1.

The protein localises to the cytoplasm. The protein resides in the endosome membrane. Its subcellular location is the early endosome. Acts as a component of the retromer cargo-selective complex (CSC). The CSC is believed to be the core functional component of retromer or respective retromer complex variants acting to prevent missorting of selected transmembrane cargo proteins into the lysosomal degradation pathway. The recruitment of the CSC to the endosomal membrane involves RAB7A and SNX3. The SNX-BAR retromer mediates retrograde transport of cargo proteins from endosomes to the trans-Golgi network (TGN) and is involved in endosome-to-plasma membrane transport for cargo protein recycling. The SNX3-retromer mediates the retrograde endosome-to-TGN transport of WLS distinct from the SNX-BAR retromer pathway. The SNX27-retromer is believed to be involved in endosome-to-plasma membrane trafficking and recycling of a broad spectrum of cargo proteins. The CSC complex seems to act as recruitment hub for other proteins, such as the WASH complex and TBC1D5. Required for retrograde transport of lysosomal enzyme receptor IGF2R. Required to regulate transcytosis of the polymeric immunoglobulin receptor (pIgR-pIgA). Required for the endosomal localization of WASHC2 (indicative for the WASH complex). Required for the endosomal localization of TBC1D5. Mediates retromer cargo recognition of SORL1 and is involved in trafficking of SORL1 implicated in sorting and processing of APP. Involved in retromer-independent lysosomal sorting of F2R. Involved in recycling of ADRB2. Acts redundantly with VSP26B in SNX-27 mediated endocytic recycling of SLC2A1/GLUT1. Enhances the affinity of SNX27 for PDZ-binding motifs in cargo proteins. The sequence is that of Vacuolar protein sorting-associated protein 26A (Vps26a) from Rattus norvegicus (Rat).